We begin with the raw amino-acid sequence, 861 residues long: MSDADDNNSSGRRPLSLKRSGGGTVQQSFARGRSKAVVVEKKRKRVATPAKDGGPGGKQGGGAKGGESALAAKARQLGLSEEELVARQRAIARARAEAADREAQKKQDAAAMAQRAASEQRQLEEQRERVAREAREAEEAAQKAIEDEARLKAEAEAATAAKDSGRKRDDESSRRRPPAKDEKRTPEVVPMDEASALEALGGRVKRKGGAAGPGPAAKQQPARAKTDNRRRGKLTIQNILEGDEERQRSLASVRRAREREKQRRQDTSGGREKIEREVVVPEAITVADLANRMAERSVDVIKYMMKQGQMVRMNDVLDADTAELVVEDFGHIVKRVSEADVEQGFIDDDDADEAKLPRAPVIAVMGHVDHGKTSLLDALRSTDIASGEAGGITQHIGAYQVELKGGQKITFLDTPGHAAFSAMRSRGAMATDIVILVVAADDSVKPQTIEAIHHAKAAGTPIIVAVNKCDKHEANPQKVLTDLLQHEIVVEAMSGEVQSVNVSAKTREGLDELTEAIALQAELLDLKANPERSAEGIVIESQVDKGRGPVATLLVRRGTLKRGEIVVAGAQWGRVRALVDARGQQLPEAGPSLAVEILGLDGAPDPGELFAVVDSESRAREIADYRQRKGREATGGSSPASASLEQMMARLKQDETQEMPLLVKSDVQGSAEAIKQSLEGIGNDEVRARIIRAAPGGVNESDVLLAKSSGAPVFAFNVRANKQARELAEREGVEIRYYSVIYDVIDDVRNTMEGMLAPEKRENFIGYAEILEVFNITKTGKVAGCRVTEGVVRRGCGVRLLRDDTVLHEGKLKTLKRFKDEVSDVRAGTECGMAFEKYEDLRKGDQIECFEVIEVARKLEA.

Disordered regions lie at residues 1 to 69 (MSDA…GESA) and 92 to 273 (ARAR…GREK). Gly residues predominate over residues 53–65 (GGPGGKQGGGAKG). The span at 94-108 (ARAEAADREAQKKQD) shows a compositional bias: basic and acidic residues. Residues 109-120 (AAAMAQRAASEQ) show a composition bias toward low complexity. 2 stretches are compositionally biased toward basic and acidic residues: residues 121–155 (RQLE…KAEA) and 163–186 (DSGR…KRTP). Over residues 213–223 (PGPAAKQQPAR) the composition is skewed to low complexity. Residues 255 to 273 (RAREREKQRRQDTSGGREK) are compositionally biased toward basic and acidic residues. A tr-type G domain is found at 357 to 527 (PRAPVIAVMG…ALQAELLDLK (171 aa)). Residues 366-373 (GHVDHGKT) are G1. Position 366 to 373 (366 to 373 (GHVDHGKT)) interacts with GTP. Positions 391-395 (GITQH) are G2. Residues 413–416 (DTPG) are G3. GTP is bound by residues 413-417 (DTPGH) and 467-470 (NKCD). Positions 467-470 (NKCD) are G4. Residues 503 to 505 (SAK) are G5.

This sequence belongs to the TRAFAC class translation factor GTPase superfamily. Classic translation factor GTPase family. IF-2 subfamily.

Its subcellular location is the cytoplasm. In terms of biological role, one of the essential components for the initiation of protein synthesis. Protects formylmethionyl-tRNA from spontaneous hydrolysis and promotes its binding to the 30S ribosomal subunits. Also involved in the hydrolysis of GTP during the formation of the 70S ribosomal complex. This Maricaulis maris (strain MCS10) (Caulobacter maris) protein is Translation initiation factor IF-2.